A 334-amino-acid chain; its full sequence is S-adenosylmethionine decarboxylase proenzyme 1 (334 aa).

Phe-7 contacts substrate. Active-site residues include Glu-8 and Glu-11. Glu-67 is a substrate binding site. Ser-68 (schiff-base intermediate with substrate; via pyruvic acid) is an active-site residue. Ser-68 is modified (pyruvic acid (Ser); by autocatalysis). The active-site Proton donor; for catalytic activity is Cys-82. Residue Phe-223 participates in substrate binding. Active-site proton acceptor; for processing activity residues include Ser-229 and His-243. Glu-247 lines the substrate pocket. Ser-298 carries the post-translational modification Phosphoserine.

The protein belongs to the eukaryotic AdoMetDC family. In terms of assembly, heterotetramer of two alpha and two beta chains. Requires pyruvate as cofactor. Is synthesized initially as an inactive proenzyme. Formation of the active enzyme involves a self-maturation process in which the active site pyruvoyl group is generated from an internal serine residue via an autocatalytic post-translational modification. Two non-identical subunits are generated from the proenzyme in this reaction, and the pyruvate is formed at the N-terminus of the alpha chain, which is derived from the carboxyl end of the proenzyme. The post-translation cleavage follows an unusual pathway, termed non-hydrolytic serinolysis, in which the side chain hydroxyl group of the serine supplies its oxygen atom to form the C-terminus of the beta chain, while the remainder of the serine residue undergoes an oxidative deamination to produce ammonia and the pyruvoyl group blocking the N-terminus of the alpha chain. In terms of tissue distribution, expressed in embryonic stem cells; subsequently down-regulated in differentiating neural precursor cells.

It carries out the reaction S-adenosyl-L-methionine + H(+) = S-adenosyl 3-(methylsulfanyl)propylamine + CO2. It participates in amine and polyamine biosynthesis; S-adenosylmethioninamine biosynthesis; S-adenosylmethioninamine from S-adenosyl-L-methionine: step 1/1. Functionally, essential for biosynthesis of the polyamines spermidine and spermine. Promotes maintenance and self-renewal of embryonic stem cells, by maintaining spermine levels. The polypeptide is S-adenosylmethionine decarboxylase proenzyme 1 (Amd1) (Mus musculus (Mouse)).